The following is a 145-amino-acid chain: 3-hydroxyacyl-[acyl-carrier-protein] dehydratase FabZ (145 aa).

His51 is a catalytic residue.

It belongs to the thioester dehydratase family. FabZ subfamily.

The protein localises to the cytoplasm. The enzyme catalyses a (3R)-hydroxyacyl-[ACP] = a (2E)-enoyl-[ACP] + H2O. In terms of biological role, involved in unsaturated fatty acids biosynthesis. Catalyzes the dehydration of short chain beta-hydroxyacyl-ACPs and long chain saturated and unsaturated beta-hydroxyacyl-ACPs. The sequence is that of 3-hydroxyacyl-[acyl-carrier-protein] dehydratase FabZ from Staphylococcus haemolyticus (strain JCSC1435).